A 205-amino-acid polypeptide reads, in one-letter code: Outer-membrane lipoprotein LolB (205 aa).

The first 17 residues, 1-17 (MFLRHVIVFSLIALLTG), serve as a signal peptide directing secretion. Residue Cys-18 is the site of N-palmitoyl cysteine attachment. Residue Cys-18 is the site of S-diacylglycerol cysteine attachment.

It belongs to the LolB family. In terms of assembly, monomer.

It localises to the cell outer membrane. Plays a critical role in the incorporation of lipoproteins in the outer membrane after they are released by the LolA protein. This Pseudomonas savastanoi pv. phaseolicola (strain 1448A / Race 6) (Pseudomonas syringae pv. phaseolicola (strain 1448A / Race 6)) protein is Outer-membrane lipoprotein LolB.